A 221-amino-acid chain; its full sequence is Large ribosomal subunit protein uL4 (221 aa).

The interval 48–77 is disordered; that stretch reads TASTKTRGEVSGGGRKPWIQKHTGRARQGS.

Belongs to the universal ribosomal protein uL4 family. In terms of assembly, part of the 50S ribosomal subunit.

Functionally, one of the primary rRNA binding proteins, this protein initially binds near the 5'-end of the 23S rRNA. It is important during the early stages of 50S assembly. It makes multiple contacts with different domains of the 23S rRNA in the assembled 50S subunit and ribosome. Its function is as follows. Forms part of the polypeptide exit tunnel. In Thermosipho africanus (strain TCF52B), this protein is Large ribosomal subunit protein uL4.